We begin with the raw amino-acid sequence, 811 residues long: Zinc finger CCCH domain-containing protein 11A (811 aa).

3 consecutive C3H1-type zinc fingers follow at residues 2–30 (PNQGEDCYFFFFYSTCTKGDSCPFRHCEA), 32–58 (LGNETVCTLWQEGRCFRQVCRFRHMEI), and 61–87 (KRSEIPCYWENQPTGCQKLNCAFHHNR). Serine 109 carries the post-translational modification Phosphoserine. Glycyl lysine isopeptide (Lys-Gly) (interchain with G-Cter in SUMO2) cross-links involve residues lysine 115 and lysine 125. Position 133 is a phosphoserine (serine 133). Disordered regions lie at residues 140 to 195 (MKVE…GLRV), 224 to 258 (KKMKEKSKKQGEGSSGVSSLLLHPEPVPGPEKENV), 286 to 352 (GKRK…EKVN), and 368 to 434 (ERAS…TCIK). Lysine 141 is covalently cross-linked (Glycyl lysine isopeptide (Lys-Gly) (interchain with G-Cter in SUMO2)). Residues serine 150 and serine 172 each carry the phosphoserine modification. Acidic residues predominate over residues 161 to 176 (ADDDEDDDDQFSEEGD). Serine 291 is subject to Phosphoserine. Composition is skewed to basic and acidic residues over residues 310–323 (KKVEAPEANIDKTP) and 368–391 (ERASQKRGELQTKLKTEGPSKTDD). At threonine 322 the chain carries Phosphothreonine. A coiled-coil region spans residues 363–424 (EEILLERASQ…KHRQQEAERQ (62 aa)). Position 371 is a phosphoserine (serine 371). Polar residues predominate over residues 392-403 (STSGARSSSTIR). Positions 418–434 (QQEAERQKSKKDTTCIK) are enriched in basic and acidic residues. Lysine 479 is covalently cross-linked (Glycyl lysine isopeptide (Lys-Gly) (interchain with G-Cter in SUMO2)). A disordered region spans residues 483–550 (ALRVQQSSES…KEASGETTGV (68 aa)). Residues 487-499 (QQSSESSTSSPSQ) show a composition bias toward low complexity. Lysine 620 participates in a covalent cross-link: Glycyl lysine isopeptide (Lys-Gly) (interchain with G-Cter in SUMO2). Residues 716-769 (TVPEAENPRDSLVLPPTQSSSDSSPPEVSGPSSSQMSMKTRRLSSASTGKPQLS) form a disordered region. A compositionally biased stretch (low complexity) spans 730 to 749 (PPTQSSSDSSPPEVSGPSSS). Polar residues predominate over residues 750–766 (QMSMKTRRLSSASTGKP).

Interacts with TREX complex components THOC2, DDX39 and POLDIP3; the interactions are ATP-dependent. Interacts with PABPN1; this interaction retains ZC3H11A in nuclear speckles. Interacts with KPNA3.

Its subcellular location is the nucleus speckle. Functionally, through its association with TREX complex components, may participate in the export and post-transcriptional coordination of selected mRNA transcripts, including those required to maintain the metabolic processes in embryonic cells. Binds RNA. The protein is Zinc finger CCCH domain-containing protein 11A (ZC3H11A) of Pongo abelii (Sumatran orangutan).